A 155-amino-acid chain; its full sequence is SsrA-binding protein (155 aa).

Positions 135-147 (TIKRRDQERDIKK) are enriched in basic and acidic residues. Residues 135 to 155 (TIKRRDQERDIKKQMKHYNAR) are disordered.

The protein belongs to the SmpB family.

The protein localises to the cytoplasm. Functionally, required for rescue of stalled ribosomes mediated by trans-translation. Binds to transfer-messenger RNA (tmRNA), required for stable association of tmRNA with ribosomes. tmRNA and SmpB together mimic tRNA shape, replacing the anticodon stem-loop with SmpB. tmRNA is encoded by the ssrA gene; the 2 termini fold to resemble tRNA(Ala) and it encodes a 'tag peptide', a short internal open reading frame. During trans-translation Ala-aminoacylated tmRNA acts like a tRNA, entering the A-site of stalled ribosomes, displacing the stalled mRNA. The ribosome then switches to translate the ORF on the tmRNA; the nascent peptide is terminated with the 'tag peptide' encoded by the tmRNA and targeted for degradation. The ribosome is freed to recommence translation, which seems to be the essential function of trans-translation. The protein is SsrA-binding protein of Streptococcus pyogenes serotype M6 (strain ATCC BAA-946 / MGAS10394).